Consider the following 30-residue polypeptide: Dendrotoxin B (30 aa).

Cysteine 3 and cysteine 22 are joined by a disulfide.

The protein belongs to the three-finger toxin family. Short-chain subfamily. Orphan group XI sub-subfamily. In terms of processing, contains 4 disulfide bonds. In terms of tissue distribution, expressed by the venom gland.

It localises to the secreted. Functionally, blocks voltage-gated potassium channels (Kv). This is the slowly inactivating phase of potassium efflux which is blocked by this toxin. In Dendroaspis angusticeps (Eastern green mamba), this protein is Dendrotoxin B.